Consider the following 611-residue polypeptide: Alkyldihydroxyacetonephosphate synthase (611 aa).

Residues 137–317 (VKNAPDLIVL…TEAVMKVHAV (181 aa)) form the FAD-binding PCMH-type domain. FAD-binding positions include 169 to 175 (PMGGGSN), 237 to 243 (DSFEFST), 250 to 255 (TCSSGH), and 301 to 307 (EGTLGII). Substrate is bound at residue Arg447. Tyr508 (proton donor/acceptor) is an active-site residue. Positions 544–546 (HHH) are important for enzyme activity. The short motif at 609–611 (PKL) is the Microbody targeting signal element.

It belongs to the FAD-binding oxidoreductase/transferase type 4 family. In terms of assembly, homodimer. FAD is required as a cofactor.

The protein localises to the peroxisome. It catalyses the reaction a long chain fatty alcohol + a 1-acylglycerone 3-phosphate = a 1-O-alkylglycerone 3-phosphate + a long-chain fatty acid + H(+). Its pathway is glycerolipid metabolism; ether lipid biosynthesis. Catalyzes the exchange of an acyl for a long-chain alkyl group and the formation of the ether bond in the biosynthesis of ether phospholipids. The sequence is that of Alkyldihydroxyacetonephosphate synthase (eapA) from Dictyostelium discoideum (Social amoeba).